The sequence spans 917 residues: Isoleucine--tRNA ligase (917 aa).

The 'HIGH' region motif lies at 57-67; it reads PYANGNLHMGH. L-isoleucyl-5'-AMP is bound at residue glutamate 554. The 'KMSKS' region signature appears at 595–599; sequence KMSKS. Lysine 598 contributes to the ATP binding site. Zn(2+) is bound by residues cysteine 886, cysteine 889, cysteine 906, and cysteine 909.

This sequence belongs to the class-I aminoacyl-tRNA synthetase family. IleS type 1 subfamily. In terms of assembly, monomer. It depends on Zn(2+) as a cofactor.

The protein resides in the cytoplasm. The enzyme catalyses tRNA(Ile) + L-isoleucine + ATP = L-isoleucyl-tRNA(Ile) + AMP + diphosphate. Functionally, catalyzes the attachment of isoleucine to tRNA(Ile). As IleRS can inadvertently accommodate and process structurally similar amino acids such as valine, to avoid such errors it has two additional distinct tRNA(Ile)-dependent editing activities. One activity is designated as 'pretransfer' editing and involves the hydrolysis of activated Val-AMP. The other activity is designated 'posttransfer' editing and involves deacylation of mischarged Val-tRNA(Ile). The protein is Isoleucine--tRNA ligase (ileS) of Staphylococcus aureus (strain MSSA476).